A 469-amino-acid chain; its full sequence is 3-isopropylmalate dehydratase large subunit (469 aa).

Positions 347, 407, and 410 each coordinate [4Fe-4S] cluster.

The protein belongs to the aconitase/IPM isomerase family. LeuC type 1 subfamily. As to quaternary structure, heterodimer of LeuC and LeuD. It depends on [4Fe-4S] cluster as a cofactor.

The enzyme catalyses (2R,3S)-3-isopropylmalate = (2S)-2-isopropylmalate. The protein operates within amino-acid biosynthesis; L-leucine biosynthesis; L-leucine from 3-methyl-2-oxobutanoate: step 2/4. Functionally, catalyzes the isomerization between 2-isopropylmalate and 3-isopropylmalate, via the formation of 2-isopropylmaleate. The chain is 3-isopropylmalate dehydratase large subunit from Synechococcus sp. (strain RCC307).